A 200-amino-acid polypeptide reads, in one-letter code: Phycocyanobilin lyase subunit beta (200 aa).

This sequence belongs to the CpcE/RpcE/PecE family. In terms of assembly, cpcE and CpcF associate to form a lyase.

Its function is as follows. Required for the chromophorylation of the CpcA gene product. The sequence is that of Phycocyanobilin lyase subunit beta (cpcF) from Nostoc sp. (strain PCC 7120 / SAG 25.82 / UTEX 2576).